The following is a 460-amino-acid chain: Sorting nexin-4 (460 aa).

The segment covering 1–16 (MTATEQQQDDFSNVSW) has biased composition (polar residues). The interval 1–53 (MTATEQQQDDFSNVSWSEHVHDQQTRSVPDAEEPGHDMNAPGTGLERDAPSLG) is disordered. The region spanning 56–178 (KLECTVDTPI…TFLESPDWNA (123 aa)) is the PX domain. Coiled-coil stretches lie at residues 238–266 (EKVI…QKLI), 306–337 (RDMQ…EYLN), and 374–403 (QARR…TSDM).

The protein belongs to the sorting nexin family. As to quaternary structure, forms a complex with ATG20 and ATG17.

Its subcellular location is the cytoplasm. It localises to the membrane. The protein resides in the endosome membrane. Its function is as follows. Sorting nexin involved in the separation or division of vacuoles throughout the entire life cycle of the cells. Involved in retrieval of late-Golgi SNAREs from post-Golgi endosomes to the trans-Golgi network, for cytoplasm to vacuole transport (Cvt), and autophagy of large cargos including mitophagy, pexophagy and glycophagy. Autophagy is required for proper vegetative growth, asexual/sexual reproduction, and full virulence. Autophagy is particularly involved in the biosynthesis of deoxynivalenol (DON), an important virulence determinant. The polypeptide is Sorting nexin-4 (Gibberella zeae (strain ATCC MYA-4620 / CBS 123657 / FGSC 9075 / NRRL 31084 / PH-1) (Wheat head blight fungus)).